The primary structure comprises 1154 residues: BEACH domain-containing protein lvsF (1154 aa).

2 disordered regions span residues His-92–Ser-123 and Thr-139–Thr-167. Residues Pro-145–Gln-158 show a composition bias toward pro residues. The BEACH-type PH domain occupies Asp-289–Val-384. The region spanning Thr-389–Arg-697 is the BEACH domain. Disordered stretches follow at residues Ser-554–Asn-575, Asn-739–Asn-762, and Asn-779–Asn-825. 2 stretches are compositionally biased toward low complexity: residues Asn-779–Asn-788 and Asn-795–Glu-822. WD repeat units lie at residues Leu-858–Ser-897, Leu-900–Ser-939, Gly-942–Ile-980, Asp-992–Arg-1031, Cys-1034–Lys-1074, Lys-1076–Asp-1110, and Ser-1119–Gln-1154.

This Dictyostelium discoideum (Social amoeba) protein is BEACH domain-containing protein lvsF (lvsF).